Reading from the N-terminus, the 268-residue chain is Enoyl-[acyl-carrier-protein] reductase [NADH] (268 aa).

NAD(+)-binding positions include 20 to 21 (SI), 64 to 65 (DV), and 95 to 96 (IA). Residue Tyr-157 participates in substrate binding. NAD(+) contacts are provided by Lys-164 and Ile-193.

The protein belongs to the short-chain dehydrogenases/reductases (SDR) family. FabI subfamily. In terms of assembly, homodimer. Homotetramer.

The enzyme catalyses a 2,3-saturated acyl-[ACP] + NAD(+) = a (2E)-enoyl-[ACP] + NADH + H(+). It carries out the reaction a 2,3-saturated acyl-CoA + NAD(+) = a (2E)-enoyl-CoA + NADH + H(+). It functions in the pathway lipid metabolism; mycolic acid biosynthesis. Its function is as follows. Enoyl-ACP reductase of the type II fatty acid syntase (FAS-II) system, which is involved in the biosynthesis of mycolic acids, a major component of mycobacterial cell walls. Catalyzes the NADH-dependent reduction of the double bond of 2-trans-enoyl-[acyl-carrier protein], an essential step in the fatty acid elongation cycle of the FAS-II pathway. Shows preference for long-chain fatty acyl thioester substrates, and can also use 2-trans-enoyl-CoAs as alternative substrates. The mycobacterial FAS-II system utilizes the products of the FAS-I system as primers to extend fatty acyl chain lengths up to C56, forming the meromycolate chain that serves as the precursor for final mycolic acids. This Mycobacterium avium protein is Enoyl-[acyl-carrier-protein] reductase [NADH].